We begin with the raw amino-acid sequence, 298 residues long: (S)-ureidoglycine aminohydrolase (298 aa).

A signal peptide spans 1–20 (MRSLYLIVFIVISLVKASKS). Residues 222–288 (TMDFQPGEFL…ALGKTRSRYL (67 aa)) form the Cupin type-2 domain. Mn(2+) is bound by residues Glu235, His237, His241, and Gln275. Glu235 provides a ligand contact to substrate. 3 residues coordinate substrate: Gln275, Tyr287, and Lys291.

This sequence belongs to the UGHY family. Homooctamer. Requires Mn(2+) as cofactor.

It is found in the endoplasmic reticulum. The catalysed reaction is (S)-2-ureidoglycine + H2O = (S)-ureidoglycolate + NH4(+). Functionally, involved in the catabolism of purine nucleotides. Can use (S)-2-ureidoglycine as substrate, but not allantoate. The sequential activity of AAH, UGLYAH and UAH allows a complete purine breakdown without the intermediate generation of urea. In Arabidopsis thaliana (Mouse-ear cress), this protein is (S)-ureidoglycine aminohydrolase (UGLYAH).